We begin with the raw amino-acid sequence, 430 residues long: Adenylosuccinate synthetase (430 aa).

Residues 12-18 (GDEGKGK) and 40-42 (GHT) each bind GTP. Asp13 acts as the Proton acceptor in catalysis. Mg(2+)-binding residues include Asp13 and Gly40. IMP is bound by residues 13–16 (DEGK), 38–41 (NAGH), Thr128, Arg142, Gln223, Thr238, and Arg302. His41 acts as the Proton donor in catalysis. Residue 298–304 (TTTGRPR) participates in substrate binding. GTP contacts are provided by residues Arg304, 330–332 (SID), and 413–415 (SVG).

Belongs to the adenylosuccinate synthetase family. As to quaternary structure, homodimer. The cofactor is Mg(2+).

Its subcellular location is the cytoplasm. It carries out the reaction IMP + L-aspartate + GTP = N(6)-(1,2-dicarboxyethyl)-AMP + GDP + phosphate + 2 H(+). It functions in the pathway purine metabolism; AMP biosynthesis via de novo pathway; AMP from IMP: step 1/2. Its function is as follows. Plays an important role in the de novo pathway of purine nucleotide biosynthesis. Catalyzes the first committed step in the biosynthesis of AMP from IMP. This is Adenylosuccinate synthetase from Lactococcus lactis subsp. lactis (strain IL1403) (Streptococcus lactis).